A 413-amino-acid polypeptide reads, in one-letter code: Putative glutamate--cysteine ligase 2 (413 aa).

The tract at residues 392–413 is disordered; sequence GGVCALSTPQGDPLPGWAERLH.

This sequence belongs to the glutamate--cysteine ligase type 2 family. YbdK subfamily.

It catalyses the reaction L-cysteine + L-glutamate + ATP = gamma-L-glutamyl-L-cysteine + ADP + phosphate + H(+). Its function is as follows. ATP-dependent carboxylate-amine ligase which exhibits weak glutamate--cysteine ligase activity. The sequence is that of Putative glutamate--cysteine ligase 2 from Bordetella bronchiseptica (strain ATCC BAA-588 / NCTC 13252 / RB50) (Alcaligenes bronchisepticus).